Consider the following 203-residue polypeptide: Outer-membrane lipoprotein carrier protein (203 aa).

A signal peptide spans 1-21; the sequence is MKKLIISCCLLATFSAAGAWA. The disordered stretch occupies residues 174–203; sequence ALKSQQSGPISADKFKFRPPKGVTVDDQRQ.

This sequence belongs to the LolA family. Monomer.

The protein resides in the periplasm. Participates in the translocation of lipoproteins from the inner membrane to the outer membrane. Only forms a complex with a lipoprotein if the residue after the N-terminal Cys is not an aspartate (The Asp acts as a targeting signal to indicate that the lipoprotein should stay in the inner membrane). This chain is Outer-membrane lipoprotein carrier protein, found in Erwinia tasmaniensis (strain DSM 17950 / CFBP 7177 / CIP 109463 / NCPPB 4357 / Et1/99).